Consider the following 166-residue polypeptide: 2-amino-4-hydroxy-6-hydroxymethyldihydropteridine pyrophosphokinase (166 aa).

It belongs to the HPPK family.

It carries out the reaction 6-hydroxymethyl-7,8-dihydropterin + ATP = (7,8-dihydropterin-6-yl)methyl diphosphate + AMP + H(+). It functions in the pathway cofactor biosynthesis; tetrahydrofolate biosynthesis; 2-amino-4-hydroxy-6-hydroxymethyl-7,8-dihydropteridine diphosphate from 7,8-dihydroneopterin triphosphate: step 4/4. Its function is as follows. Catalyzes the transfer of pyrophosphate from adenosine triphosphate (ATP) to 6-hydroxymethyl-7,8-dihydropterin, an enzymatic step in folate biosynthesis pathway. The sequence is that of 2-amino-4-hydroxy-6-hydroxymethyldihydropteridine pyrophosphokinase (folK) from Streptococcus pyogenes serotype M6 (strain ATCC BAA-946 / MGAS10394).